A 475-amino-acid chain; its full sequence is MAAGPLRGLAVAGGGESSDSEDDGWEIGYLDRKSQKLKGPLPVEERQETFKKALTTGNISLVEELLDSGISVDTSFQYGWTSLMYAASVSNVELVRVLLDRGANASFDKDKQTVLITACSARGSEEKILKCIELLLSRNADPNVACRRLMTPIMYAARDGHPQVVALLVAHGAEVNTQDENGYTALTWAARQGHKNVVLKLLELGANKMIQTKDGKTPSEIAKRNKHLEIFNFLSLTLNPLEGKLHQLTKEESICKLLRTDSDKEKDHIFSSYTAFGDLEIFLHGLGLEHMTDLLKEREITLRHLLTMRKDELAKNGITSRDQQKIMAALKELEVEEIKFGELPEVAKLEISGDEFLNFLLKLNKQCGHLITAVQNIITELPVNSHKIVLEWASPRNFTSVCEELVSNVEDLSEEVCKLKDLIQKLQNERENDPTHIPLMEEVSTWNSRILKRTAITVCGFGFLLFICKLAFQRK.

Positions 1–25 (MAAGPLRGLAVAGGGESSDSEDDGW) are disordered. Phosphoserine is present on residues S17, S18, and S20. ANK repeat units follow at residues 45–74 (ERQE…SVDT), 78–107 (YGWT…NASF), 110–144 (DKQT…DPNV), 148–177 (RLMT…EVNT), 181–210 (NGYT…NKMI), and 214–243 (DGKT…PLEG). In terms of domain architecture, SAM spans 272 to 334 (SYTAFGDLEI…KIMAALKELE (63 aa)).

As to quaternary structure, interacts with DDX4, PIWIL1, RANBP9 and TDRD1.

The protein localises to the cytoplasm. Functionally, plays a central role during spermatogenesis by repressing transposable elements and preventing their mobilization, which is essential for the germline integrity. Acts via the piRNA metabolic process, which mediates the repression of transposable elements during meiosis by forming complexes composed of piRNAs and Piwi proteins and governs the methylation and subsequent repression of transposons. Its association with pi-bodies suggests a participation in the primary piRNAs metabolic process. Required prior to the pachytene stage to facilitate the production of multiple types of piRNAs, including those associated with repeats involved in the regulation of retrotransposons. May act by mediating protein-protein interactions during germ cell maturation. This is Ankyrin repeat, SAM and basic leucine zipper domain-containing protein 1 (ASZ1) from Bos taurus (Bovine).